The following is a 300-amino-acid chain: GTPase Era (300 aa).

An Era-type G domain is found at 8 to 176; it reads RCGYVAIVGR…EKVIADHLPE (169 aa). Positions 16–23 are G1; it reads GRPNVGKS. 16–23 contributes to the GTP binding site; it reads GRPNVGKS. Residues 42–46 form a G2 region; the sequence is QTTRH. The tract at residues 63 to 66 is G3; it reads DTPG. GTP contacts are provided by residues 63–67 and 125–128; these read DTPGM and NKTD. The G4 stretch occupies residues 125-128; the sequence is NKTD. A G5 region spans residues 155-157; the sequence is ISA. Residues 199 to 283 form the KH type-2 domain; it reads VREKIMRQLG…MLNLWVKVKG (85 aa).

It belongs to the TRAFAC class TrmE-Era-EngA-EngB-Septin-like GTPase superfamily. Era GTPase family. Monomer.

It localises to the cytoplasm. The protein resides in the cell inner membrane. An essential GTPase that binds both GDP and GTP, with rapid nucleotide exchange. Plays a role in 16S rRNA processing and 30S ribosomal subunit biogenesis and possibly also in cell cycle regulation and energy metabolism. This is GTPase Era from Pseudomonas fluorescens (strain Pf0-1).